The following is a 546-amino-acid chain: Probable protein kinase UbiB (546 aa).

One can recognise a Protein kinase domain in the interval 124-502; the sequence is DFEIKPLASA…HVRQGQSRYF (379 aa). ATP contacts are provided by residues 130 to 138 and Lys153; that span reads LASASIAQV. The active-site Proton acceptor is the Asp288. Transmembrane regions (helical) follow at residues 501-521 and 522-542; these read YFLGIGATLVLSGTFLLVSRP and EWGLMPGWLMAGGLIAWFVGW.

Belongs to the ABC1 family. UbiB subfamily.

The protein localises to the cell inner membrane. It participates in cofactor biosynthesis; ubiquinone biosynthesis [regulation]. In terms of biological role, is probably a protein kinase regulator of UbiI activity which is involved in aerobic coenzyme Q (ubiquinone) biosynthesis. The protein is Probable protein kinase UbiB of Escherichia coli O127:H6 (strain E2348/69 / EPEC).